A 516-amino-acid chain; its full sequence is L-amino acid oxidase bordonein-L (516 aa).

Residues Met-1–Cys-18 form the signal peptide. Cys-28 and Cys-189 are joined by a disulfide. Residues Met-61–Ala-62, Glu-81–Ala-82, Arg-89, and Gly-103–Arg-106 contribute to the FAD site. Substrate-binding residues include Arg-106 and His-239. Residue Val-279 coordinates FAD. A disulfide bond links Cys-349 and Cys-430. A glycan (N-linked (GlcNAc...) asparagine) is linked at Asn-379. Position 390 (Tyr-390) interacts with substrate. Residues Glu-475 and Gly-482 to Thr-487 contribute to the FAD site. Residue Gly-482–Trp-483 participates in substrate binding.

Homodimer; non-covalently linked. FAD serves as cofactor. In terms of processing, N-glycosylated. N-glycan probably consists of the disaccharide N-acetylglucosamine-fucose (HexNAc-Fuc). In terms of tissue distribution, expressed by the venom gland.

The protein localises to the secreted. The catalysed reaction is an L-alpha-amino acid + O2 + H2O = a 2-oxocarboxylate + H2O2 + NH4(+). It carries out the reaction L-leucine + O2 + H2O = 4-methyl-2-oxopentanoate + H2O2 + NH4(+). The enzyme catalyses L-phenylalanine + O2 + H2O = 3-phenylpyruvate + H2O2 + NH4(+). It catalyses the reaction L-tryptophan + O2 + H2O = indole-3-pyruvate + H2O2 + NH4(+). The catalysed reaction is L-methionine + O2 + H2O = 4-methylsulfanyl-2-oxobutanoate + H2O2 + NH4(+). It carries out the reaction L-isoleucine + O2 + H2O = (S)-3-methyl-2-oxopentanoate + H2O2 + NH4(+). The enzyme catalyses L-arginine + O2 + H2O = 5-guanidino-2-oxopentanoate + H2O2 + NH4(+). It catalyses the reaction L-histidine + O2 + H2O = 3-(imidazol-5-yl)pyruvate + H2O2 + NH4(+). Functionally, catalyzes an oxidative deamination of predominantly hydrophobic and aromatic L-amino acids, thus producing hydrogen peroxide that may contribute to the diverse toxic effects of this enzyme. Is highly active on L-Met, L-Leu, L-Trp, and L-Phe, moderately active on L-Ile, L-His, and L-Arg, and weakly or not active on L-Gln, L-Val, L-Asn, L-Ala, L-Lys, L-Ser, L-Thr, L-Pro, L-Asp, L-Gly, L-Tyr, L-Cys and L-Glu. This enzyme exhibits diverse biological activities, such as hemorrhage, hemolysis, edema, apoptosis of vascular endothelial cells or tumor cell lines, antibacterial and antiparasitic activities, as well as regulation of platelet aggregation. Its effect on platelets is controversial, since it either induces aggregation or inhibits agonist-induced aggregation. These different effects are probably due to different experimental conditions. In vitro, the enzyme exhibits cytotoxicity against fibroblast cell line and kills Leishmania amazonensis promastigotes, intensified by substrate addition. The chain is L-amino acid oxidase bordonein-L from Crotalus durissus terrificus (South American rattlesnake).